Consider the following 701-residue polypeptide: Pre-mRNA-splicing factor CLF1 (701 aa).

HAT repeat units lie at residues 43–75 (SYQQ…WEIE), 78–110 (HDFP…LELS), 112–144 (KNIN…TEEM), 146–177 (KNYP…FEAR), 179–210 (EEKE…YEME), 214–253 (DDVN…SWTS), 266–299 (EIFK…FEKN), 309–341 (SVLI…LLQN), 343–378 (SNKS…FWIW), 388–424 (NNPV…FELR), 545–576 (MQYD…FESS), and 601–642 (SQIE…VNGS).

It belongs to the crooked-neck family. As to quaternary structure, associated with the spliceosome.

Its subcellular location is the nucleus. Functionally, involved in pre-mRNA splicing and cell cycle progression. Required for the spliceosome assembly and initiation of the DNA replication. The polypeptide is Pre-mRNA-splicing factor CLF1 (CLF1) (Candida albicans (strain SC5314 / ATCC MYA-2876) (Yeast)).